The sequence spans 352 residues: Holliday junction branch migration complex subunit RuvB (352 aa).

A large ATPase domain (RuvB-L) region spans residues 13-201 (LPLRKKELRL…FGISQKIEFY (189 aa)). ATP-binding positions include arginine 41, glycine 82, lysine 85, threonine 86, threonine 87, 148 to 150 (EDF), arginine 191, tyrosine 201, and arginine 238. Residue threonine 86 participates in Mg(2+) binding. The tract at residues 202–273 (NYDELKQILL…LIKKALNSYQ (72 aa)) is small ATPAse domain (RuvB-S). The tract at residues 276–352 (DKGLDSLDRH…KYIDSKNDDF (77 aa)) is head domain (RuvB-H). 2 residues coordinate DNA: arginine 330 and arginine 335.

Belongs to the RuvB family. Homohexamer. Forms an RuvA(8)-RuvB(12)-Holliday junction (HJ) complex. HJ DNA is sandwiched between 2 RuvA tetramers; dsDNA enters through RuvA and exits via RuvB. An RuvB hexamer assembles on each DNA strand where it exits the tetramer. Each RuvB hexamer is contacted by two RuvA subunits (via domain III) on 2 adjacent RuvB subunits; this complex drives branch migration. In the full resolvosome a probable DNA-RuvA(4)-RuvB(12)-RuvC(2) complex forms which resolves the HJ.

Its subcellular location is the cytoplasm. It carries out the reaction ATP + H2O = ADP + phosphate + H(+). Its function is as follows. The RuvA-RuvB-RuvC complex processes Holliday junction (HJ) DNA during genetic recombination and DNA repair, while the RuvA-RuvB complex plays an important role in the rescue of blocked DNA replication forks via replication fork reversal (RFR). RuvA specifically binds to HJ cruciform DNA, conferring on it an open structure. The RuvB hexamer acts as an ATP-dependent pump, pulling dsDNA into and through the RuvAB complex. RuvB forms 2 homohexamers on either side of HJ DNA bound by 1 or 2 RuvA tetramers; 4 subunits per hexamer contact DNA at a time. Coordinated motions by a converter formed by DNA-disengaged RuvB subunits stimulates ATP hydrolysis and nucleotide exchange. Immobilization of the converter enables RuvB to convert the ATP-contained energy into a lever motion, pulling 2 nucleotides of DNA out of the RuvA tetramer per ATP hydrolyzed, thus driving DNA branch migration. The RuvB motors rotate together with the DNA substrate, which together with the progressing nucleotide cycle form the mechanistic basis for DNA recombination by continuous HJ branch migration. Branch migration allows RuvC to scan DNA until it finds its consensus sequence, where it cleaves and resolves cruciform DNA. This Prochlorococcus marinus (strain MIT 9301) protein is Holliday junction branch migration complex subunit RuvB.